A 984-amino-acid polypeptide reads, in one-letter code: Ephrin type-B receptor 1 (984 aa).

The N-terminal stretch at 1–17 (MALDYLLLLLLASAVAA) is a signal peptide. Over 18-540 (MEETLMDTRT…YKSELREQLP (523 aa)) the chain is Extracellular. The region spanning 19-201 (EETLMDTRTA…FFKKCPSIVQ (183 aa)) is the Eph LBD domain. Fibronectin type-III domains are found at residues 322 to 432 (VPSG…TNQA) and 433 to 528 (APST…TLTD). Asn-334, Asn-426, and Asn-480 each carry an N-linked (GlcNAc...) asparagine glycan. Residues 541–563 (LIAGSAAAGVVFVVSLVAISIVC) form a helical membrane-spanning segment. Topologically, residues 564-984 (SRKRAYSKEA…QISQSPTAMA (421 aa)) are cytoplasmic. Tyr-600 is subject to Phosphotyrosine. Residues 619 to 882 (VKIEEVIGAG…EIVNTLDKMI (264 aa)) enclose the Protein kinase domain. ATP contacts are provided by residues 625–633 (IGAGEFGEV) and Lys-651. Asp-744 functions as the Proton acceptor in the catalytic mechanism. One can recognise an SAM domain in the interval 911–975 (TAFTTVDDWL…LNSIHSMRVQ (65 aa)). The residue at position 928 (Tyr-928) is a Phosphotyrosine; by autocatalysis. Residues 982–984 (AMA) carry the PDZ-binding motif.

This sequence belongs to the protein kinase superfamily. Tyr protein kinase family. Ephrin receptor subfamily. In terms of assembly, heterotetramer upon binding of the ligand. The heterotetramer is composed of an ephrin dimer and a receptor dimer. Oligomerization is probably required to induce biological responses. Interacts with EPHB6; transphosphorylates EPHB6 to form an active signaling complex. Interacts with PICK1. Interacts (through Tyr-594) with NCK1 (via SH2 domain); activates the JUN cascade to regulate cell adhesion. The ligand-activated form interacts (through Tyr-928) with GRB7 and GRB10 (via SH2 domains). The ligand-activated form interacts (residues within the catalytic domain) with GRB2 (via SH2 domain). Interacts with GRB2, SHC1 and SRC; activates the MAPK/ERK cascade to regulate cell migration. Interacts with CBL; regulates receptor degradation through ubiquitination. Interacts with ACP1. In terms of processing, phosphorylated. Autophosphorylation is stimulated by the ligand EFNB1. Required for interaction with SH2 domain-containing interactors, for activation of the MAPK/ERK and JUN signaling cascades and for ubiquitination by CBL. Post-translationally, ubiquitinated; (EFNB1)ligand-induced poly- and/or multi-ubiquitination by CBL is regulated by SRC and leads to lysosomal degradation. In terms of tissue distribution, preferentially expressed in brain.

The protein localises to the cell membrane. It is found in the early endosome membrane. It localises to the cell projection. The protein resides in the dendrite. It catalyses the reaction L-tyrosyl-[protein] + ATP = O-phospho-L-tyrosyl-[protein] + ADP + H(+). In terms of biological role, receptor tyrosine kinase which binds promiscuously transmembrane ephrin-B family ligands residing on adjacent cells, leading to contact-dependent bidirectional signaling into neighboring cells. The signaling pathway downstream of the receptor is referred to as forward signaling while the signaling pathway downstream of the ephrin ligand is referred to as reverse signaling. Cognate/functional ephrin ligands for this receptor include EFNB1, EFNB2 and EFNB3. During nervous system development, regulates retinal axon guidance redirecting ipsilaterally ventrotemporal retinal ganglion cells axons at the optic chiasm midline. This probably requires repulsive interaction with EFNB2. In the adult nervous system together with EFNB3, regulates chemotaxis, proliferation and polarity of the hippocampus neural progenitors. In addition to its role in axon guidance also plays an important redundant role with other ephrin-B receptors in development and maturation of dendritic spines and synapse formation. May also regulate angiogenesis. More generally, may play a role in targeted cell migration and adhesion. Upon activation by EFNB1 and probably other ephrin-B ligands activates the MAPK/ERK and the JNK signaling cascades to regulate cell migration and adhesion respectively. Involved in the maintenance of the pool of satellite cells (muscle stem cells) by promoting their self-renewal and reducing their activation and differentiation. This is Ephrin type-B receptor 1 (EPHB1) from Homo sapiens (Human).